The following is a 126-amino-acid chain: Major sperm protein 3 (126 aa).

Alanine 2 carries the post-translational modification N-acetylalanine. Positions 8 to 125 (DIATMPAQKV…RRKNLPIEYN (118 aa)) constitute an MSP domain.

Sperm.

The protein resides in the cell projection. The protein localises to the pseudopodium. Its subcellular location is the cytoplasm. It is found in the cytoskeleton. Its function is as follows. Central component in molecular interactions underlying sperm crawling. Forms an extensive filament system that extends from sperm villipoda, along the leading edge of the pseudopod. The protein is Major sperm protein 3 (MSP-3) of Globodera rostochiensis (Golden nematode worm).